Consider the following 128-residue polypeptide: Small ribosomal subunit protein uS8 (128 aa).

Belongs to the universal ribosomal protein uS8 family. As to quaternary structure, part of the 30S ribosomal subunit. Contacts proteins S5 and S12.

In terms of biological role, one of the primary rRNA binding proteins, it binds directly to 16S rRNA central domain where it helps coordinate assembly of the platform of the 30S subunit. This chain is Small ribosomal subunit protein uS8, found in Methylacidiphilum infernorum (isolate V4) (Methylokorus infernorum (strain V4)).